The following is a 345-amino-acid chain: Methylthioribose-1-phosphate isomerase (345 aa).

Residues 44–46 (RGA), Arg-86, and Gln-194 each bind substrate. The Proton donor role is filled by Asp-235. Position 245 to 246 (245 to 246 (NK)) interacts with substrate.

Belongs to the eIF-2B alpha/beta/delta subunits family. MtnA subfamily.

It carries out the reaction 5-(methylsulfanyl)-alpha-D-ribose 1-phosphate = 5-(methylsulfanyl)-D-ribulose 1-phosphate. The protein operates within amino-acid biosynthesis; L-methionine biosynthesis via salvage pathway; L-methionine from S-methyl-5-thio-alpha-D-ribose 1-phosphate: step 1/6. In terms of biological role, catalyzes the interconversion of methylthioribose-1-phosphate (MTR-1-P) into methylthioribulose-1-phosphate (MTRu-1-P). The sequence is that of Methylthioribose-1-phosphate isomerase from Desulfitobacterium hafniense (strain Y51).